The sequence spans 315 residues: Peroxidase 4 (315 aa).

The first 19 residues, 1–19 (MAIFKILVLLLSLCCFSQA), serve as a signal peptide directing secretion. A Pyrrolidone carboxylic acid modification is found at glutamine 20. Intrachain disulfides connect cysteine 30/cysteine 110, cysteine 63/cysteine 68, cysteine 116/cysteine 311, and cysteine 195/cysteine 221. Histidine 61 functions as the Proton acceptor in the catalytic mechanism. The Ca(2+) site is built by aspartate 62, valine 65, glycine 67, aspartate 69, and serine 71. Proline 158 is a binding site for substrate. Heme b is bound at residue histidine 188. A Ca(2+)-binding site is contributed by threonine 189. Residue asparagine 205 is glycosylated (N-linked (GlcNAc...) asparagine). Aspartate 234, threonine 237, and aspartate 242 together coordinate Ca(2+).

This sequence belongs to the peroxidase family. Classical plant (class III) peroxidase subfamily. The cofactor is heme b. It depends on Ca(2+) as a cofactor.

Its subcellular location is the secreted. It carries out the reaction 2 a phenolic donor + H2O2 = 2 a phenolic radical donor + 2 H2O. In terms of biological role, removal of H(2)O(2), oxidation of toxic reductants, biosynthesis and degradation of lignin, suberization, auxin catabolism, response to environmental stresses such as wounding, pathogen attack and oxidative stress. These functions might be dependent on each isozyme/isoform in each plant tissue. This chain is Peroxidase 4 (PER4), found in Arabidopsis thaliana (Mouse-ear cress).